The chain runs to 406 residues: Argininosuccinate synthase (406 aa).

Residues 12 to 20 (AYSGGLDTS) and alanine 40 each bind ATP. L-citrulline is bound by residues tyrosine 92 and serine 97. Residue glycine 122 coordinates ATP. 3 residues coordinate L-aspartate: threonine 124, asparagine 128, and aspartate 129. Asparagine 128 contributes to the L-citrulline binding site. L-citrulline contacts are provided by arginine 132, serine 181, serine 190, glutamate 266, and tyrosine 278.

This sequence belongs to the argininosuccinate synthase family. Type 1 subfamily. Homotetramer.

The protein localises to the cytoplasm. The catalysed reaction is L-citrulline + L-aspartate + ATP = 2-(N(omega)-L-arginino)succinate + AMP + diphosphate + H(+). The protein operates within amino-acid biosynthesis; L-arginine biosynthesis; L-arginine from L-ornithine and carbamoyl phosphate: step 2/3. The sequence is that of Argininosuccinate synthase from Serratia proteamaculans (strain 568).